Reading from the N-terminus, the 30-residue chain is Protein ScvA (30 aa).

The disordered stretch occupies residues 1–30 (MERQNVQQQRGKDQRPQRPGASNPRRPNQR).

In terms of biological role, might be involved in DNA-binding; the protein binds DNA in gel-shift assays and immunogold electron microscopy shows labelling of condensed chromatin. This is Protein ScvA (scvA) from Coxiella burnetii (strain RSA 493 / Nine Mile phase I).